Here is a 792-residue protein sequence, read N- to C-terminus: Alpha-1,6-mannosylglycoprotein 6-beta-N-acetylglucosaminyltransferase B (792 aa).

The Cytoplasmic segment spans residues 1–24; the sequence is MITVNPDGKIMVRRCLVTLRPFRL. Residues 25–45 form a helical; Signal-anchor for type II membrane protein membrane-spanning segment; sequence FVLGIGFFTLCFLMTSLGGQF. Over 46-792 the chain is Lumenal; it reads SARRLGDSPF…GQVALCQGCL (747 aa). Asn-127 carries N-linked (GlcNAc...) asparagine glycosylation. Cystine bridges form between Cys-157–Cys-195, Cys-168–Cys-208, Cys-184–Cys-353, Cys-387–Cys-644, Cys-700–Cys-775, Cys-704–Cys-777, Cys-711–Cys-764, Cys-732–Cys-753, and Cys-788–Cys-791.

Belongs to the glycosyltransferase 18 family. It depends on Mn(2+) as a cofactor. As to expression, predominantly expressed in brain. Expressed in all areas of the adult and fetal brain. Also expressed at much lower levels in testis, spleen and thymus.

The protein resides in the golgi apparatus membrane. The enzyme catalyses N(4)-{beta-D-GlcNAc-(1-&gt;2)-[beta-D-GlcNAc-(1-&gt;4)]-alpha-D-Man-(1-&gt;3)-[beta-D-GlcNAc-(1-&gt;2)-alpha-D-Man-(1-&gt;6)]-beta-D-Man-(1-&gt;4)-beta-D-GlcNAc-(1-&gt;4)-beta-D-GlcNAc}-L-asparaginyl-[protein] + UDP-N-acetyl-alpha-D-glucosamine = N(4)-{beta-D-GlcNAc-(1-&gt;2)-[beta-D-GlcNAc-(1-&gt;4)]-alpha-D-Man-(1-&gt;3)-[beta-D-GlcNAc-(1-&gt;2)-[beta-D-GlcNAc-(1-&gt;6)]-alpha-D-Man-(1-&gt;6)]-beta-D-Man-(1-&gt;4)-beta-D-GlcNAc-(1-&gt;4)-beta-D-GlcNAc}-L-asparaginyl-[protein] + UDP + H(+). The catalysed reaction is 3-O-[N-acetyl-beta-D-glucosaminyl-(1-&gt;2)-alpha-D-mannosyl]-L-seryl-[protein] + UDP-N-acetyl-alpha-D-glucosamine = O(3)-{N-acetyl-beta-D-glucosaminyl-(1-&gt;2)-[N-acetyl-beta-D-glucosaminyl-(1-&gt;6)]-alpha-D-mannosyl}-L-seryl-[protein] + UDP + H(+). It catalyses the reaction 3-O-[N-acetyl-beta-D-glucosaminyl-(1-&gt;2)-alpha-D-mannosyl]-L-threonyl-[protein] + UDP-N-acetyl-alpha-D-glucosamine = O(3)-{N-acetyl-beta-D-glucosaminyl-(1-&gt;2)-[N-acetyl-beta-D-glucosaminyl-(1-&gt;6)]-alpha-D-mannosyl}-L-threonyl-[protein] + UDP + H(+). Its pathway is protein modification; protein glycosylation. Functionally, glycosyltransferase that acts on alpha-linked mannose of N-glycans and O-mannosyl glycans. Catalyzes the transfer of N-acetylglucosamine (GlcNAc) to the beta 1-6 linkage of the mannose residue of GlcNAc-beta1,2-Man-alpha on both the alpha1,3- and alpha1,6-linked mannose arms in the core structure of N-glycan. Also acts on the GlcNAc-beta1,2-Man-alpha1-Ser/Thr moiety, forming a 2,6-branched structure in brain O-mannosyl glycan. Plays an active role in modulating integrin and laminin-dependent adhesion and migration of neuronal cells via its activity in the O-mannosyl glycan pathway. The chain is Alpha-1,6-mannosylglycoprotein 6-beta-N-acetylglucosaminyltransferase B (MGAT5B) from Homo sapiens (Human).